A 947-amino-acid polypeptide reads, in one-letter code: Altered inheritance of mitochondria protein 3 (947 aa).

3 disordered regions span residues 1-334, 354-810, and 824-904; these read MGFW…LLPQ, MSST…QDEV, and RKTN…KSLE. Residues 36 to 54 show a composition bias toward basic residues; that stretch reads ASKKHYNNSKARRERKSGK. S57, S58, and S64 each carry phosphoserine. Residues 59–69 show a composition bias toward acidic residues; sequence DEEYDSEDEME. Residues 70 to 84 are compositionally biased toward basic and acidic residues; that stretch reads YERKPTDIRSLKDPK. Composition is skewed to low complexity over residues 93–105 and 130–163; these read PGQK…QQQQ and QSQY…GVVP. A compositionally biased stretch (polar residues) spans 177–255; sequence GSNSNATSYQ…YVSHGSTNLG (79 aa). Low complexity-rich tracts occupy residues 256-289 and 313-334; these read QSQF…QQGQ and QQQQ…LLPQ. Residues 354 to 367 are compositionally biased toward polar residues; it reads MSSTTNMQDSNPSY. Over residues 379–395 the composition is skewed to pro residues; the sequence is GGQPPVPVRMQPQPPQP. The segment covering 466–475 has biased composition (polar residues); that stretch reads IQPNTTSSAA. Residue S476 is modified to Phosphoserine. The span at 488 to 502 shows a compositional bias: basic and acidic residues; the sequence is DNERNSGNKENDEST. The span at 633–644 shows a compositional bias: polar residues; that stretch reads VPQSKPQSQSQF. Residues 667-676 show a composition bias toward low complexity; sequence SQSSNSSDSS. Position 729 is a phosphothreonine (T729). Positions 749–759 are enriched in basic and acidic residues; sequence DSSKDANKYEK. Residues 763-774 are compositionally biased toward polar residues; it reads PVTSSIQAQQST. A Phosphothreonine modification is found at T861. The segment covering 862 to 879 has biased composition (pro residues); sequence PPRPPPSRSSPKKVPPVV. A compositionally biased stretch (basic residues) spans 888–899; it reads KKPPVVPKKKPL.

This sequence belongs to the AIM3 family. Interacts with RVS167.

The protein localises to the membrane raft. This is Altered inheritance of mitochondria protein 3 (AIM3) from Saccharomyces cerevisiae (strain ATCC 204508 / S288c) (Baker's yeast).